The chain runs to 313 residues: Ribosomal RNA small subunit methyltransferase H (313 aa).

S-adenosyl-L-methionine-binding positions include 35-37 (GGH), Asp-55, Phe-79, Asp-101, and Gln-108.

This sequence belongs to the methyltransferase superfamily. RsmH family.

The protein resides in the cytoplasm. The catalysed reaction is cytidine(1402) in 16S rRNA + S-adenosyl-L-methionine = N(4)-methylcytidine(1402) in 16S rRNA + S-adenosyl-L-homocysteine + H(+). In terms of biological role, specifically methylates the N4 position of cytidine in position 1402 (C1402) of 16S rRNA. The sequence is that of Ribosomal RNA small subunit methyltransferase H from Escherichia coli O81 (strain ED1a).